Reading from the N-terminus, the 560-residue chain is SET domain-containing protein 4 (560 aa).

Disordered regions lie at residues 1–61 and 125–157; these read MTSP…PSPQ and KKQNQDDNSKVSVTHNESSKENKITPSMRAEDN. A compositionally biased stretch (low complexity) spans 26–38; that stretch reads SRSSSYSSNSSMS. Residues 47–59 are compositionally biased toward polar residues; it reads LSVSSAASETLPS. A compositionally biased stretch (basic and acidic residues) spans 141–157; sequence ESSKENKITPSMRAEDN. The PHD-type zinc-finger motif lies at 160–210; sequence KNGCICGSSDSKDELFIQCNKCKTWQHKLCYAFKKSDPIKRDFVCKRCDSD. An SET domain is found at 346-475; it reads ADIEVRKSSN…KGEEISVEWQ (130 aa).

This sequence belongs to the SET3 family.

Functionally, putative chromatin regulator. The protein is SET domain-containing protein 4 (SET4) of Saccharomyces cerevisiae (strain ATCC 204508 / S288c) (Baker's yeast).